A 239-amino-acid polypeptide reads, in one-letter code: DNA repair protein RecO (239 aa).

This sequence belongs to the RecO family.

In terms of biological role, involved in DNA repair and RecF pathway recombination. The protein is DNA repair protein RecO of Bifidobacterium longum (strain DJO10A).